The primary structure comprises 513 residues: Maturase K (513 aa).

Belongs to the intron maturase 2 family. MatK subfamily.

The protein localises to the plastid. Its subcellular location is the chloroplast. In terms of biological role, usually encoded in the trnK tRNA gene intron. Probably assists in splicing its own and other chloroplast group II introns. The polypeptide is Maturase K (Cyrilla racemiflora (Swamp titi)).